Consider the following 302-residue polypeptide: Sulfate adenylyltransferase subunit 2 (302 aa).

It belongs to the PAPS reductase family. CysD subfamily. As to quaternary structure, heterodimer composed of CysD, the smaller subunit, and CysN.

The catalysed reaction is sulfate + ATP + H(+) = adenosine 5'-phosphosulfate + diphosphate. It functions in the pathway sulfur metabolism; hydrogen sulfide biosynthesis; sulfite from sulfate: step 1/3. In terms of biological role, with CysN forms the ATP sulfurylase (ATPS) that catalyzes the adenylation of sulfate producing adenosine 5'-phosphosulfate (APS) and diphosphate, the first enzymatic step in sulfur assimilation pathway. APS synthesis involves the formation of a high-energy phosphoric-sulfuric acid anhydride bond driven by GTP hydrolysis by CysN coupled to ATP hydrolysis by CysD. The chain is Sulfate adenylyltransferase subunit 2 from Shigella dysenteriae serotype 1 (strain Sd197).